Consider the following 169-residue polypeptide: Gamma-crystallin 2 (169 aa).

2 consecutive Beta/gamma crystallin 'Greek key' domains span residues Tyr-1–Ser-34 and Gly-35–Pro-77. The tract at residues Gln-78–Pro-82 is connecting peptide. Beta/gamma crystallin 'Greek key' domains lie at His-83–Glu-123 and Gly-124–Leu-166.

This sequence belongs to the beta/gamma-crystallin family. As to quaternary structure, monomer.

Crystallins are the dominant structural components of the vertebrate eye lens. The polypeptide is Gamma-crystallin 2 (Rana temporaria (European common frog)).